Reading from the N-terminus, the 153-residue chain is Transcriptional repressor NrdR (153 aa).

A zinc finger lies at 3-34 (CPYCGYEDSKVIDTRPADEGRTIKRRRECLKC). The ATP-cone domain maps to 49-139 (ILVIKKDNRR…VYRQFKDINT (91 aa)).

This sequence belongs to the NrdR family. Requires Zn(2+) as cofactor.

Negatively regulates transcription of bacterial ribonucleotide reductase nrd genes and operons by binding to NrdR-boxes. The polypeptide is Transcriptional repressor NrdR (Caldicellulosiruptor saccharolyticus (strain ATCC 43494 / DSM 8903 / Tp8T 6331)).